We begin with the raw amino-acid sequence, 557 residues long: Inositol-3-phosphate synthase 1 (557 aa).

Residues glycine 67, glycine 68, asparagine 69, asparagine 70, aspartate 141, serine 177, valine 178, glutamine 188, arginine 191, threonine 228, alanine 229, asparagine 230, threonine 231, glycine 278, serine 279, aspartate 303, serine 306, asparagine 337, asparagine 338, aspartate 339, and lysine 352 each contribute to the NAD(+) site. Position 279 is a phosphoserine (serine 279). Serine 357 is subject to Phosphoserine. 4 residues coordinate NAD(+): glycine 390, aspartate 391, aspartate 419, and serine 420. A disordered region spans residues 512–557 (GPGIKPGEVVATSPLPCKKEPTPATNGCTGDANGHPQAPTPKLSTA). Serine 524 is subject to Phosphoserine.

This sequence belongs to the myo-inositol 1-phosphate synthase family. It depends on NAD(+) as a cofactor. In terms of tissue distribution, in testis, it is expressed in Sertoli cells. Highly expressed in 2 types of germ cells, pachytene spermatocytes and round spermatids.

It is found in the cytoplasm. The enzyme catalyses D-glucose 6-phosphate = 1D-myo-inositol 3-phosphate. It participates in polyol metabolism; myo-inositol biosynthesis; myo-inositol from D-glucose 6-phosphate: step 1/2. In terms of biological role, key enzyme in myo-inositol biosynthesis pathway that catalyzes the conversion of glucose 6-phosphate to 1-myo-inositol 1-phosphate in a NAD-dependent manner. Rate-limiting enzyme in the synthesis of all inositol-containing compounds. The chain is Inositol-3-phosphate synthase 1 (Isyna1) from Mus musculus (Mouse).